The following is an 84-amino-acid chain: Exodeoxyribonuclease 7 small subunit (84 aa).

This sequence belongs to the XseB family. As to quaternary structure, heterooligomer composed of large and small subunits.

The protein resides in the cytoplasm. The enzyme catalyses Exonucleolytic cleavage in either 5'- to 3'- or 3'- to 5'-direction to yield nucleoside 5'-phosphates.. In terms of biological role, bidirectionally degrades single-stranded DNA into large acid-insoluble oligonucleotides, which are then degraded further into small acid-soluble oligonucleotides. In Haemophilus influenzae (strain 86-028NP), this protein is Exodeoxyribonuclease 7 small subunit.